The chain runs to 463 residues: Probable Xaa-Pro aminopeptidase pepP (463 aa).

4 residues coordinate Mn(2+): Asp259, Asp270, Glu393, and Glu433.

The protein belongs to the peptidase M24B family. The cofactor is Mn(2+).

The catalysed reaction is Release of any N-terminal amino acid, including proline, that is linked to proline, even from a dipeptide or tripeptide.. Functionally, catalyzes the removal of a penultimate prolyl residue from the N-termini of peptides. This Pyrenophora teres f. teres (strain 0-1) (Barley net blotch fungus) protein is Probable Xaa-Pro aminopeptidase pepP (pepP).